The primary structure comprises 393 residues: Phospho-N-acetylmuramoyl-pentapeptide-transferase (393 aa).

Helical transmembrane passes span 29-49, 75-95, 101-121, 138-158, 194-214, 226-246, 263-283, 290-310, 315-335, and 370-390; these read RAVM…PWVI, TPTM…LLWF, FVWV…VDDW, YLWQ…SVSE, VSYP…IVGA, GLAI…AYVT, AGEL…FLWF, VFMG…IAVI, IVLG…MAQV, and QVVV…LSTL.

This sequence belongs to the glycosyltransferase 4 family. MraY subfamily. It depends on Mg(2+) as a cofactor.

The protein resides in the cell inner membrane. It catalyses the reaction UDP-N-acetyl-alpha-D-muramoyl-L-alanyl-gamma-D-glutamyl-meso-2,6-diaminopimeloyl-D-alanyl-D-alanine + di-trans,octa-cis-undecaprenyl phosphate = di-trans,octa-cis-undecaprenyl diphospho-N-acetyl-alpha-D-muramoyl-L-alanyl-D-glutamyl-meso-2,6-diaminopimeloyl-D-alanyl-D-alanine + UMP. It participates in cell wall biogenesis; peptidoglycan biosynthesis. In terms of biological role, catalyzes the initial step of the lipid cycle reactions in the biosynthesis of the cell wall peptidoglycan: transfers peptidoglycan precursor phospho-MurNAc-pentapeptide from UDP-MurNAc-pentapeptide onto the lipid carrier undecaprenyl phosphate, yielding undecaprenyl-pyrophosphoryl-MurNAc-pentapeptide, known as lipid I. This chain is Phospho-N-acetylmuramoyl-pentapeptide-transferase, found in Leptothrix cholodnii (strain ATCC 51168 / LMG 8142 / SP-6) (Leptothrix discophora (strain SP-6)).